The sequence spans 360 residues: Isocitrate dehydrogenase [NAD] subunit 1, mitochondrial (360 aa).

The N-terminal 11 residues, 1–11, are a transit peptide targeting the mitochondrion; sequence MLNRTIAKRTL. Substrate is bound by residues R109, R140, and D228. D228 lines the Mg(2+) pocket.

Belongs to the isocitrate and isopropylmalate dehydrogenases family. In terms of assembly, octamer of two non-identical subunits IDH1 and IDH2. Requires Mg(2+) as cofactor. It depends on Mn(2+) as a cofactor.

Its subcellular location is the mitochondrion. It catalyses the reaction D-threo-isocitrate + NAD(+) = 2-oxoglutarate + CO2 + NADH. Its activity is regulated as follows. Allosterically regulated by several compounds including AMP, NAD(+), and citrate. Functionally, performs an essential role in the oxidative function of the citric acid cycle. Also binds RNA; specifically to the 5'-untranslated leaders of mitochondrial mRNAs. This is Isocitrate dehydrogenase [NAD] subunit 1, mitochondrial (IDH1) from Saccharomyces cerevisiae (strain ATCC 204508 / S288c) (Baker's yeast).